Here is a 299-residue protein sequence, read N- to C-terminus: Taste receptor type 2 member 1 (299 aa).

Residues 1–9 (MLESHLIIY) lie on the Extracellular side of the membrane. Residues 10–30 (FLLAVIQFLLGIFTNGIIVVV) form a helical membrane-spanning segment. The Cytoplasmic segment spans residues 31-55 (NGIDLIKHRKMAPLDLLLSCLAVSR). A helical transmembrane segment spans residues 56 to 76 (IFLQLFIFYVNVIVIFFIEFI). Residues 77–81 (MCSAN) lie on the Extracellular side of the membrane. A helical membrane pass occupies residues 82-102 (CAILLFVNELELWLATWLGVF). Residues 103 to 124 (YCAKVASVRHPLFIWLKMRISK) lie on the Cytoplasmic side of the membrane. Residues 125–145 (LVPWMILGSLLYVSMICVFHS) form a helical membrane-spanning segment. Residues 146 to 178 (KYAGFMVPHFLRNFFSQNATIQKEDTLAIQIFS) lie on the Extracellular side of the membrane. The N-linked (GlcNAc...) asparagine glycan is linked to Asn-163. A helical membrane pass occupies residues 179–199 (FVAEFSVPLLIFLVAVLLLIF). At 200–222 (SLGRHTRQMRNTVAGSRVPGRGA) the chain is on the cytoplasmic side. A helical membrane pass occupies residues 223–243 (PISALLSILSFLILYFSHCMI). At 244-257 (KVFLSSLKFHVRRF) the chain is on the extracellular side. Residues 258–278 (IFLFFILVIGIYPSGHSLILI) form a helical membrane-spanning segment. Residues 279–299 (LGNPKLKQNAKKFLLHSKCCQ) are Cytoplasmic-facing.

This sequence belongs to the G-protein coupled receptor T2R family.

The protein resides in the membrane. Receptor that may play a role in the perception of bitterness and is gustducin-linked. May play a role in sensing the chemical composition of the gastrointestinal content. The activity of this receptor may stimulate alpha gustducin, mediate PLC-beta-2 activation and lead to the gating of TRPM5. In Pan paniscus (Pygmy chimpanzee), this protein is Taste receptor type 2 member 1 (TAS2R1).